Reading from the N-terminus, the 654-residue chain is Glutamyl-tRNA(Gln) amidotransferase subunit B, mitochondrial (654 aa).

A mitochondrion-targeting transit peptide spans methionine 1–glutamate 8. The disordered stretch occupies residues aspartate 79–threonine 101.

Belongs to the GatB/GatE family. GatB subfamily. As to quaternary structure, subunit of the heterotrimeric GatCAB amidotransferase (AdT) complex, composed of A, B and C subunits.

Its subcellular location is the mitochondrion. The catalysed reaction is L-glutamyl-tRNA(Gln) + L-glutamine + ATP + H2O = L-glutaminyl-tRNA(Gln) + L-glutamate + ADP + phosphate + H(+). In terms of biological role, allows the formation of correctly charged Gln-tRNA(Gln) through the transamidation of misacylated Glu-tRNA(Gln) in the mitochondria. The reaction takes place in the presence of glutamine and ATP through an activated gamma-phospho-Glu-tRNA(Gln). The protein is Glutamyl-tRNA(Gln) amidotransferase subunit B, mitochondrial of Pyricularia oryzae (strain 70-15 / ATCC MYA-4617 / FGSC 8958) (Rice blast fungus).